Here is a 300-residue protein sequence, read N- to C-terminus: Nuclear egress protein 1 (300 aa).

The CCCH-type zinc-finger motif lies at 90-217 (CLSLSGMGYY…YIVFPGKALH (128 aa)).

It belongs to the herpesviridae NEC1 protein family. Forms a heterohexameric complex with NEC2. Interacts with capsid vertex specific component 2/CVC2; this interaction directs the capsid to the host inner nuclear membrane to initiate budding. In terms of processing, phosphorylated at serine residues in the N-terminus. This phosphorylation regulates the localization within the inner nuclear membrane.

It is found in the host nucleus inner membrane. In terms of biological role, plays an essential role in virion nuclear egress, the first step of virion release from infected cell. Within the host nucleus, NEC1 interacts with the newly formed capsid through the vertexes and directs it to the inner nuclear membrane by associating with NEC2. Induces the budding of the capsid at the inner nuclear membrane as well as its envelopment into the perinuclear space. There, the NEC1/NEC2 complex promotes the fusion of the enveloped capsid with the outer nuclear membrane and the subsequent release of the viral capsid into the cytoplasm where it will reach the secondary budding sites in the host Golgi or trans-Golgi network. The polypeptide is Nuclear egress protein 1 (Gallid herpesvirus 2 (strain Chicken/Md5/ATCC VR-987) (GaHV-2)).